The following is an 883-amino-acid chain: Phosphoenolpyruvate carboxylase (883 aa).

Residues His138 and Lys546 contribute to the active site.

This sequence belongs to the PEPCase type 1 family. Mg(2+) serves as cofactor.

It carries out the reaction oxaloacetate + phosphate = phosphoenolpyruvate + hydrogencarbonate. In terms of biological role, forms oxaloacetate, a four-carbon dicarboxylic acid source for the tricarboxylic acid cycle. The sequence is that of Phosphoenolpyruvate carboxylase from Klebsiella pneumoniae (strain 342).